The following is a 370-amino-acid chain: 4-hydroxy-3-methylbut-2-en-1-yl diphosphate synthase (flavodoxin) (370 aa).

The [4Fe-4S] cluster site is built by Cys-270, Cys-273, Cys-305, and Glu-312.

It belongs to the IspG family. [4Fe-4S] cluster is required as a cofactor.

It carries out the reaction (2E)-4-hydroxy-3-methylbut-2-enyl diphosphate + oxidized [flavodoxin] + H2O + 2 H(+) = 2-C-methyl-D-erythritol 2,4-cyclic diphosphate + reduced [flavodoxin]. It functions in the pathway isoprenoid biosynthesis; isopentenyl diphosphate biosynthesis via DXP pathway; isopentenyl diphosphate from 1-deoxy-D-xylulose 5-phosphate: step 5/6. Functionally, converts 2C-methyl-D-erythritol 2,4-cyclodiphosphate (ME-2,4cPP) into 1-hydroxy-2-methyl-2-(E)-butenyl 4-diphosphate. In Marinomonas sp. (strain MWYL1), this protein is 4-hydroxy-3-methylbut-2-en-1-yl diphosphate synthase (flavodoxin).